The primary structure comprises 108 residues: Putative DNA-directed RNA polymerase subunit 1 inactive homolog (108 aa).

This chain is Putative DNA-directed RNA polymerase subunit 1 inactive homolog, found in Acanthamoeba polyphaga (Amoeba).